The primary structure comprises 214 residues: Thymidylate kinase (214 aa).

An ATP-binding site is contributed by 11–18 (GPEGAGKT).

The protein belongs to the thymidylate kinase family.

It catalyses the reaction dTMP + ATP = dTDP + ADP. In terms of biological role, phosphorylation of dTMP to form dTDP in both de novo and salvage pathways of dTTP synthesis. This Leuconostoc citreum (strain KM20) protein is Thymidylate kinase.